The following is a 383-amino-acid chain: Ovalbumin (383 aa).

An N-acetylglycine modification is found at G2. Residues 22 to 48 constitute a signal peptide (not cleaved); that stretch reads HHANDNMLYSPFAILSTLAMVFLGAKD. A Phosphoserine modification is found at S69. C74 and C121 are disulfide-bonded. N-linked (GlcNAc...) asparagine glycans are attached at residues N293 and N312. Residue S345 is modified to Phosphoserine.

This sequence belongs to the serpin family. Ov-serpin subfamily. Post-translationally, the signal sequence is not cleaved. The functional signal for membrane translocation of ovalbumin becomes accessible when the nascent chain is 50 to 60 residues long. The hydrophobic sequence which lies between residues 27 and 43 folds back on the preceding residues to form an amphipathic hairpin structure which is the signal element recognized by the membrane. As to expression, major protein of egg white.

It is found in the secreted. Its function is as follows. Storage protein of egg white. Lack protease inhibitory activity. This is Ovalbumin (SERPINB14) from Coturnix coturnix (Common quail).